The chain runs to 469 residues: Argininosuccinate lyase (469 aa).

It belongs to the lyase 1 family. Argininosuccinate lyase subfamily.

Its subcellular location is the cytoplasm. The catalysed reaction is 2-(N(omega)-L-arginino)succinate = fumarate + L-arginine. It functions in the pathway amino-acid biosynthesis; L-arginine biosynthesis; L-arginine from L-ornithine and carbamoyl phosphate: step 3/3. The protein is Argininosuccinate lyase of Burkholderia orbicola (strain MC0-3).